Consider the following 565-residue polypeptide: DNA ligase B (565 aa).

Lys130 functions as the N6-AMP-lysine intermediate in the catalytic mechanism.

The protein belongs to the NAD-dependent DNA ligase family. LigB subfamily.

It carries out the reaction NAD(+) + (deoxyribonucleotide)n-3'-hydroxyl + 5'-phospho-(deoxyribonucleotide)m = (deoxyribonucleotide)n+m + AMP + beta-nicotinamide D-nucleotide.. Catalyzes the formation of phosphodiester linkages between 5'-phosphoryl and 3'-hydroxyl groups in double-stranded DNA using NAD as a coenzyme and as the energy source for the reaction. This Yersinia enterocolitica serotype O:8 / biotype 1B (strain NCTC 13174 / 8081) protein is DNA ligase B.